The chain runs to 322 residues: Anthranilate phosphoribosyltransferase (322 aa).

Residues Gly-71, 74 to 75 (GD), Thr-79, 81 to 84 (NVST), 99 to 107 (KFGNRSASG), and Ala-111 each bind 5-phospho-alpha-D-ribose 1-diphosphate. Residue Gly-71 coordinates anthranilate. Ser-83 contacts Mg(2+). Asn-102 serves as a coordination point for anthranilate. Arg-157 is a binding site for anthranilate. 2 residues coordinate Mg(2+): Asp-215 and Glu-216.

It belongs to the anthranilate phosphoribosyltransferase family. As to quaternary structure, homodimer. Mg(2+) serves as cofactor.

It carries out the reaction N-(5-phospho-beta-D-ribosyl)anthranilate + diphosphate = 5-phospho-alpha-D-ribose 1-diphosphate + anthranilate. The protein operates within amino-acid biosynthesis; L-tryptophan biosynthesis; L-tryptophan from chorismate: step 2/5. Its function is as follows. Catalyzes the transfer of the phosphoribosyl group of 5-phosphorylribose-1-pyrophosphate (PRPP) to anthranilate to yield N-(5'-phosphoribosyl)-anthranilate (PRA). The polypeptide is Anthranilate phosphoribosyltransferase (Thermoplasma acidophilum (strain ATCC 25905 / DSM 1728 / JCM 9062 / NBRC 15155 / AMRC-C165)).